Here is a 377-residue protein sequence, read N- to C-terminus: MEVAQPKDLKEDFVLAKRRHAELVRQKRIFNARNRIIGGDTTAWDAQVCDQNIKAATEKARDEAFAAEMRQNDKIACLSENRERRDRKNLCKAINDFQQSFQRPETRREFDLSDPLALKKDRPARQSDYDARNTISGMQKFMGEDLNFHLRKKFQEEQNREWSLQQQKEQMIGRENQKCAEDLYLKTRLQFDETAKHLQNLETATRKAVCATVKEFNKNQALESAEKKIQERKQEQEDNLAEISNMLRGDLLSENPQQAASSFGPHRVVPDRWKGMSQEQLEEIRLVQRQQVQEKLRLQEEERQRDMDWDRRRIQKARATLLFEQQQQRLQRGLRRALDCSNLSLAREQLLQKKHMKELCTNHATEDYFTQFNTGSR.

Coiled-coil stretches lie at residues 217–250 (NKNQ…LRGD) and 282–308 (EEIR…RDMD).

This sequence belongs to the RIB43A family. In terms of assembly, microtubule inner protein component of sperm flagellar doublet microtubules. In terms of tissue distribution, expressed in trachea multiciliated cells.

Its subcellular location is the cytoplasm. It localises to the cytoskeleton. The protein localises to the cilium axoneme. The protein resides in the flagellum axoneme. Functionally, microtubule inner protein (MIP) part of the dynein-decorated doublet microtubules (DMTs) in cilia axoneme, which is required for motile cilia beating. This chain is RIB43A-like with coiled-coils protein 2, found in Bos taurus (Bovine).